The chain runs to 365 residues: Phospho-N-acetylmuramoyl-pentapeptide-transferase (365 aa).

10 helical membrane passes run 22 to 42, 74 to 94, 95 to 115, 133 to 153, 168 to 188, 201 to 221, 240 to 260, 267 to 287, 292 to 312, and 342 to 362; these read YISVRIIMISITSLLITLALG, TMGGVLILSSVIISCLLWGDL, TSIYLWILILVVIFFGAIGFF, YKFALQSIFSIVLAIVLFYLL, SLYIPMGIVIFVVLAFFIING, GLAIVPVVLVAAGLGIYAYIE, LAEVAVFCAAVCGSGLAFLWF, VFMGDVGSLTLGAVLGVIAVM, LIFFIMGLLFVVEALSVMLQV, and KVVIRFWIISLILFLIGLAAI.

The protein belongs to the glycosyltransferase 4 family. MraY subfamily. Mg(2+) serves as cofactor.

The protein localises to the cell inner membrane. The catalysed reaction is UDP-N-acetyl-alpha-D-muramoyl-L-alanyl-gamma-D-glutamyl-meso-2,6-diaminopimeloyl-D-alanyl-D-alanine + di-trans,octa-cis-undecaprenyl phosphate = di-trans,octa-cis-undecaprenyl diphospho-N-acetyl-alpha-D-muramoyl-L-alanyl-D-glutamyl-meso-2,6-diaminopimeloyl-D-alanyl-D-alanine + UMP. It functions in the pathway cell wall biogenesis; peptidoglycan biosynthesis. Its function is as follows. Catalyzes the initial step of the lipid cycle reactions in the biosynthesis of the cell wall peptidoglycan: transfers peptidoglycan precursor phospho-MurNAc-pentapeptide from UDP-MurNAc-pentapeptide onto the lipid carrier undecaprenyl phosphate, yielding undecaprenyl-pyrophosphoryl-MurNAc-pentapeptide, known as lipid I. The protein is Phospho-N-acetylmuramoyl-pentapeptide-transferase of Francisella tularensis subsp. tularensis (strain WY96-3418).